A 58-amino-acid polypeptide reads, in one-letter code: NADH dehydrogenase [ubiquinone] 1 beta subcomplex subunit 1 (58 aa).

A helical transmembrane segment spans residues 11-27 (HWVHVLVPMGFVIGCYL).

Belongs to the complex I NDUFB1 subunit family. Complex I is composed of 45 different subunits.

It localises to the mitochondrion inner membrane. Accessory subunit of the mitochondrial membrane respiratory chain NADH dehydrogenase (Complex I) that is believed not to be involved in catalysis. Complex I functions in the transfer of electrons from NADH to the respiratory chain. The immediate electron acceptor for the enzyme is believed to be ubiquinone. The chain is NADH dehydrogenase [ubiquinone] 1 beta subcomplex subunit 1 (NDUFB1) from Homo sapiens (Human).